The following is a 423-amino-acid chain: UPF0597 protein TTE0269 (423 aa).

Belongs to the UPF0597 family.

In Caldanaerobacter subterraneus subsp. tengcongensis (strain DSM 15242 / JCM 11007 / NBRC 100824 / MB4) (Thermoanaerobacter tengcongensis), this protein is UPF0597 protein TTE0269.